The sequence spans 178 residues: Ribosome maturation factor RimM (178 aa).

One can recognise a PRC barrel domain in the interval 101–178 (DGEYYWYQLQ…EMKVEWDADF (78 aa)).

It belongs to the RimM family. Binds ribosomal protein uS19.

It localises to the cytoplasm. Its function is as follows. An accessory protein needed during the final step in the assembly of 30S ribosomal subunit, possibly for assembly of the head region. Essential for efficient processing of 16S rRNA. May be needed both before and after RbfA during the maturation of 16S rRNA. It has affinity for free ribosomal 30S subunits but not for 70S ribosomes. This Pseudomonas fluorescens (strain ATCC BAA-477 / NRRL B-23932 / Pf-5) protein is Ribosome maturation factor RimM.